A 262-amino-acid chain; its full sequence is uncharacterized protein (262 aa).

Residues 41-118 (ELQKNEKIDK…EEKAEDFINK (78 aa)) adopt a coiled-coil conformation.

This is an uncharacterized protein from Plasmodium falciparum (isolate 3D7).